The primary structure comprises 205 residues: MSDSLNRPPRLILASSSPYRRELLQRLRVPFDVAVPAIDETPLAGETPEVTALRLAQAKARAVAGGLGAGVAALVIGSDQVATYDGLQIGKPGTHANALAQLQAMRGREVQFHSALCLFDSRSGTVQAVDVVTRVQFRDLPDAALEAYLLAETPYDVAGSAKSEGLGIALLEAIHSDDPTALVGLPLIALSRMLLAVGYPLLGAQ.

The active-site Proton acceptor is the aspartate 79.

Belongs to the Maf family. YceF subfamily. It depends on a divalent metal cation as a cofactor.

Its subcellular location is the cytoplasm. The enzyme catalyses N(7)-methyl-GTP + H2O = N(7)-methyl-GMP + diphosphate + H(+). Its function is as follows. Nucleoside triphosphate pyrophosphatase that hydrolyzes 7-methyl-GTP (m(7)GTP). May have a dual role in cell division arrest and in preventing the incorporation of modified nucleotides into cellular nucleic acids. This chain is 7-methyl-GTP pyrophosphatase, found in Paraburkholderia xenovorans (strain LB400).